We begin with the raw amino-acid sequence, 397 residues long: Arginine biosynthesis bifunctional protein ArgJ (397 aa).

Substrate is bound by residues Thr-143, Lys-169, Thr-180, Glu-266, Asn-392, and Thr-397. Thr-180 serves as the catalytic Nucleophile.

This sequence belongs to the ArgJ family. Heterotetramer of two alpha and two beta chains.

The protein localises to the cytoplasm. The catalysed reaction is N(2)-acetyl-L-ornithine + L-glutamate = N-acetyl-L-glutamate + L-ornithine. The enzyme catalyses L-glutamate + acetyl-CoA = N-acetyl-L-glutamate + CoA + H(+). It participates in amino-acid biosynthesis; L-arginine biosynthesis; L-ornithine and N-acetyl-L-glutamate from L-glutamate and N(2)-acetyl-L-ornithine (cyclic): step 1/1. Its pathway is amino-acid biosynthesis; L-arginine biosynthesis; N(2)-acetyl-L-ornithine from L-glutamate: step 1/4. With respect to regulation, competitively inhibited by L-ornithine. Catalyzes two activities which are involved in the cyclic version of arginine biosynthesis: the synthesis of N-acetylglutamate from glutamate and acetyl-CoA as the acetyl donor, and of ornithine by transacetylation between N(2)-acetylornithine and glutamate. The protein is Arginine biosynthesis bifunctional protein ArgJ of Thermotoga neapolitana (strain ATCC 49049 / DSM 4359 / NBRC 107923 / NS-E).